The sequence spans 318 residues: Ribose-phosphate pyrophosphokinase 2 (318 aa).

ATP is bound at residue 96 to 101; it reads RQDKKD. Residues D128, H130, D139, and D143 each contribute to the Mg(2+) site. Residue H130 participates in ATP binding. Positions 212 to 227 are binding of phosphoribosylpyrophosphate; sequence KDRVAILVDDMADTCG.

The protein belongs to the ribose-phosphate pyrophosphokinase family. In terms of assembly, homodimer. The active form is probably a hexamer composed of 3 homodimers. Mg(2+) serves as cofactor.

It carries out the reaction D-ribose 5-phosphate + ATP = 5-phospho-alpha-D-ribose 1-diphosphate + AMP + H(+). The protein operates within metabolic intermediate biosynthesis; 5-phospho-alpha-D-ribose 1-diphosphate biosynthesis; 5-phospho-alpha-D-ribose 1-diphosphate from D-ribose 5-phosphate (route I): step 1/1. Its activity is regulated as follows. Activated by magnesium and inorganic phosphate. Competitively or non-competitively inhibited by ADP, 2,3-bisphosphoglyceride or GDP. Its function is as follows. Catalyzes the synthesis of phosphoribosylpyrophosphate (PRPP) that is essential for nucleotide synthesis. The chain is Ribose-phosphate pyrophosphokinase 2 (prps2) from Xenopus tropicalis (Western clawed frog).